We begin with the raw amino-acid sequence, 572 residues long: AAA ATPase forming ring-shaped complexes (572 aa).

The interval 1-22 is disordered; the sequence is MTEPRHESGSAAPQRPATDPVQ. The stretch at 21–67 forms a coiled coil; sequence VQRQVNLLRDQKRNLDKQAAALASQNEKLVRLLNASRQEIVGLKKTL. ATP is bound at residue 270–275; that stretch reads GNGKTL. Over residues 527–539 the composition is skewed to acidic residues; the sequence is HEQQDLPDTEDSE. Residues 527 to 572 are disordered; it reads HEQQDLPDTEDSEDWARLTGRRGDTIDSVHMASHRPQGEPGPGATP.

It belongs to the AAA ATPase family. In terms of assembly, homohexamer. Assembles into a hexameric ring structure.

This Kocuria rhizophila (strain ATCC 9341 / DSM 348 / NBRC 103217 / DC2201) protein is AAA ATPase forming ring-shaped complexes.